The following is a 244-amino-acid chain: Thiol S-methyltransferase TMT1B (244 aa).

A signal peptide spans 1–23 (MDILVPLLQLLVLLLTLPLHLMA).

This sequence belongs to the methyltransferase superfamily. As to expression, expressed in the liver.

The protein resides in the endoplasmic reticulum membrane. It is found in the lipid droplet. It localises to the microsome. The protein localises to the cytoplasm. Its subcellular location is the cytosol. It catalyses the reaction a thiol + S-adenosyl-L-methionine = a methyl thioether + S-adenosyl-L-homocysteine + H(+). Its function is as follows. Thiol S-methyltransferase that catalyzes the transfer of a methyl group from S-adenosyl-L-methionine to alkyl and phenolic thiol-containing acceptor substrates. Together with TMT1B accounts for most of S-thiol methylation activity in the endoplasmic reticulum of hepatocytes. Selectively methylates S-centered nucleophiles from metabolites such as hydrogen sulfide and dithiothreitol. The protein is Thiol S-methyltransferase TMT1B of Homo sapiens (Human).